Consider the following 895-residue polypeptide: Zinc finger protein 281 (895 aa).

2 disordered regions span residues 1–44 (MKIG…EMEP) and 63–113 (FTRP…AFPS). A Glycyl lysine isopeptide (Lys-Gly) (interchain with G-Cter in SUMO2) cross-link involves residue lysine 2. Residues 7–36 (FLSGGGGTGSSGGSGSGGGGSGGGGGGGSS) show a composition bias toward gly residues. Residues arginine 65, lysine 101, and lysine 128 each participate in a glycyl lysine isopeptide (Lys-Gly) (interchain with G-Cter in SUMO2) cross-link. Basic and acidic residues-rich tracts occupy residues 130 to 140 (EKPADPEEQQS) and 202 to 218 (RTDD…DTNV). Disordered stretches follow at residues 130–149 (EKPA…HHHY) and 183–253 (HVQQ…EGAI). Glycyl lysine isopeptide (Lys-Gly) (interchain with G-Cter in SUMO2) cross-links involve residues lysine 213, lysine 219, lysine 225, lysine 232, lysine 242, and lysine 259. 3 C2H2-type zinc fingers span residues 261-283 (HICD…VLIH), 289-311 (FQCS…EKIH), and 317-339 (FGCD…KRTH). Residues lysine 301 and lysine 325 each participate in a glycyl lysine isopeptide (Lys-Gly) (interchain with G-Cter in SUMO2) cross-link. The C2H2-type 4; atypical zinc-finger motif lies at 345–367 (YKCDTCQQYFSRTDRLLKHRRTC). Residue lysine 373 forms a Glycyl lysine isopeptide (Lys-Gly) (interchain with G-Cter in SUMO2) linkage. The tract at residues 377-427 (SAEPGSSNHTNMGNLAVLSQGNTSSSRRKTKSKSIAIENKEQKTGKTNESQ) is disordered. Polar residues predominate over residues 379 to 398 (EPGSSNHTNMGNLAVLSQGN). Residue serine 395 is modified to Phosphoserine. Glycyl lysine isopeptide (Lys-Gly) (interchain with G-Cter in SUMO2) cross-links involve residues lysine 409, lysine 416, lysine 460, and lysine 477. Position 484 is a phosphoserine (serine 484). Residues lysine 493, lysine 498, lysine 539, lysine 599, lysine 617, and lysine 622 each participate in a glycyl lysine isopeptide (Lys-Gly) (interchain with G-Cter in SUMO2) cross-link. Positions 638 to 660 (SGEHSELVQEENLSPGTQTPSND) are disordered. Residues 648–660 (ENLSPGTQTPSND) are compositionally biased toward polar residues. Serine 651 is subject to Phosphoserine. Residues lysine 661 and lysine 670 each participate in a glycyl lysine isopeptide (Lys-Gly) (interchain with G-Cter in SUMO2) cross-link. The span at 778-789 (SSAFQSSSQKLT) shows a compositional bias: polar residues. The tract at residues 778 to 817 (SSAFQSSSQKLTSQKEQKNLESSTGFQIPSQELASQIDPQ) is disordered. A Phosphoserine modification is found at serine 785. Residues lysine 787, lysine 792, and lysine 795 each participate in a glycyl lysine isopeptide (Lys-Gly) (interchain with G-Cter in SUMO2) cross-link. Residues 797–815 (LESSTGFQIPSQELASQID) show a composition bias toward polar residues. Serine 807 is subject to Phosphoserine. Glycyl lysine isopeptide (Lys-Gly) (interchain with G-Cter in SUMO2) cross-links involve residues lysine 818 and lysine 840. Threonine 888 is modified (phosphothreonine).

Belongs to the krueppel C2H2-type zinc-finger protein family.

Its subcellular location is the nucleus. In terms of biological role, transcription repressor that plays a role in regulation of embryonic stem cells (ESCs) differentiation. Required for ESCs differentiation and acts by mediating autorepression of NANOG in ESCs: binds to the NANOG promoter and promotes association of NANOG protein to its own promoter and recruits the NuRD complex, which deacetylates histones. Not required for establishement and maintenance of ESCs. Represses the transcription of a number of genes including GAST, ODC1 and VIM. Binds to the G-rich box in the enhancer region of these genes. The polypeptide is Zinc finger protein 281 (ZNF281) (Homo sapiens (Human)).